The primary structure comprises 236 residues: Pyridoxine 5'-phosphate synthase (236 aa).

Asn6 is a 3-amino-2-oxopropyl phosphate binding site. 8–9 (DH) contributes to the 1-deoxy-D-xylulose 5-phosphate binding site. Arg17 serves as a coordination point for 3-amino-2-oxopropyl phosphate. His42 (proton acceptor) is an active-site residue. Arg44 and His49 together coordinate 1-deoxy-D-xylulose 5-phosphate. Glu69 acts as the Proton acceptor in catalysis. Position 99 (Thr99) interacts with 1-deoxy-D-xylulose 5-phosphate. The active-site Proton donor is the His190. 3-amino-2-oxopropyl phosphate-binding positions include Gly191 and 212 to 213 (GH).

Belongs to the PNP synthase family. In terms of assembly, homooctamer; tetramer of dimers.

It localises to the cytoplasm. The enzyme catalyses 3-amino-2-oxopropyl phosphate + 1-deoxy-D-xylulose 5-phosphate = pyridoxine 5'-phosphate + phosphate + 2 H2O + H(+). The protein operates within cofactor biosynthesis; pyridoxine 5'-phosphate biosynthesis; pyridoxine 5'-phosphate from D-erythrose 4-phosphate: step 5/5. Its function is as follows. Catalyzes the complicated ring closure reaction between the two acyclic compounds 1-deoxy-D-xylulose-5-phosphate (DXP) and 3-amino-2-oxopropyl phosphate (1-amino-acetone-3-phosphate or AAP) to form pyridoxine 5'-phosphate (PNP) and inorganic phosphate. The polypeptide is Pyridoxine 5'-phosphate synthase (Pelodictyon phaeoclathratiforme (strain DSM 5477 / BU-1)).